The chain runs to 39 residues: Natriuretic peptide TNPc (39 aa).

Cys-9 and Cys-25 are disulfide-bonded.

The protein belongs to the natriuretic peptide family. As to expression, expressed by the venom gland.

It is found in the secreted. Snake venom natriuretic peptide that exhibits vasoactive and hypotensive activity. Produces a near complete relaxation in pre-contracted aortae by activating the natriuretic peptide receptor 1 (NPR1). Stimulates cGMP production through the natriuretic peptide receptor 1 (NPR1) with high potencies for the rat NPR1 (EC(50)=100 nM), and very weak potencies over human NPR1 (28% activation at 10 uM). In vivo, reduces both systolic and diastolic blood pressure with no effect on heart rate, when intravenously injected in conscious rabbits. Also enhances the bradycardia due to cardiac afferent stimulation (Bezold-Jarisch reflex). This chain is Natriuretic peptide TNPc, found in Oxyuranus microlepidotus (Inland taipan).